We begin with the raw amino-acid sequence, 573 residues long: Urease subunit alpha 2 (573 aa).

Positions Gly-135–Ser-573 constitute a Urease domain. Residues His-140, His-142, and Lys-223 each contribute to the Ni(2+) site. N6-carboxylysine is present on Lys-223. His-225 is a binding site for substrate. Positions 252 and 278 each coordinate Ni(2+). His-326 functions as the Proton donor in the catalytic mechanism. Asp-366 is a Ni(2+) binding site.

This sequence belongs to the metallo-dependent hydrolases superfamily. Urease alpha subunit family. Heterotrimer of UreA (gamma), UreB (beta) and UreC (alpha) subunits. Three heterotrimers associate to form the active enzyme. The cofactor is Ni cation. Carboxylation allows a single lysine to coordinate two nickel ions.

Its subcellular location is the cytoplasm. It catalyses the reaction urea + 2 H2O + H(+) = hydrogencarbonate + 2 NH4(+). It participates in nitrogen metabolism; urea degradation; CO(2) and NH(3) from urea (urease route): step 1/1. In terms of biological role, disrupting the ure2 operon has no effect on urease activity or pathogen survival in BALB/c mice when administered orally. This chain is Urease subunit alpha 2, found in Brucella abortus (strain 2308).